Here is a 430-residue protein sequence, read N- to C-terminus: Trigger factor (430 aa).

The PPIase FKBP-type domain occupies 163–248 (GDVVDVDYKG…LNSIKTSILP (86 aa)).

It belongs to the FKBP-type PPIase family. Tig subfamily.

The protein resides in the cytoplasm. The enzyme catalyses [protein]-peptidylproline (omega=180) = [protein]-peptidylproline (omega=0). Functionally, involved in protein export. Acts as a chaperone by maintaining the newly synthesized protein in an open conformation. Functions as a peptidyl-prolyl cis-trans isomerase. This Lawsonia intracellularis (strain PHE/MN1-00) protein is Trigger factor.